We begin with the raw amino-acid sequence, 455 residues long: Kynurenine 3-monooxygenase (455 aa).

This sequence belongs to the aromatic-ring hydroxylase family. KMO subfamily. Requires FAD as cofactor.

The enzyme catalyses L-kynurenine + NADPH + O2 + H(+) = 3-hydroxy-L-kynurenine + NADP(+) + H2O. Its pathway is cofactor biosynthesis; NAD(+) biosynthesis; quinolinate from L-kynurenine: step 1/3. In terms of biological role, catalyzes the hydroxylation of L-kynurenine (L-Kyn) to form 3-hydroxy-L-kynurenine (L-3OHKyn). Required for synthesis of quinolinic acid. The chain is Kynurenine 3-monooxygenase from Xanthomonas oryzae pv. oryzae (strain MAFF 311018).